A 433-amino-acid polypeptide reads, in one-letter code: 3-phosphoshikimate 1-carboxyvinyltransferase (433 aa).

3 residues coordinate 3-phosphoshikimate: lysine 22, serine 23, and arginine 27. Lysine 22 is a binding site for phosphoenolpyruvate. Residues glycine 94 and arginine 122 each contribute to the phosphoenolpyruvate site. Positions 168, 169, 170, 196, 319, and 346 each coordinate 3-phosphoshikimate. Glutamine 170 contacts phosphoenolpyruvate. Catalysis depends on aspartate 319, which acts as the Proton acceptor. Positions 350, 394, and 418 each coordinate phosphoenolpyruvate.

The protein belongs to the EPSP synthase family. As to quaternary structure, monomer.

It localises to the cytoplasm. The enzyme catalyses 3-phosphoshikimate + phosphoenolpyruvate = 5-O-(1-carboxyvinyl)-3-phosphoshikimate + phosphate. It participates in metabolic intermediate biosynthesis; chorismate biosynthesis; chorismate from D-erythrose 4-phosphate and phosphoenolpyruvate: step 6/7. Functionally, catalyzes the transfer of the enolpyruvyl moiety of phosphoenolpyruvate (PEP) to the 5-hydroxyl of shikimate-3-phosphate (S3P) to produce enolpyruvyl shikimate-3-phosphate and inorganic phosphate. The sequence is that of 3-phosphoshikimate 1-carboxyvinyltransferase from Nitrosomonas eutropha (strain DSM 101675 / C91 / Nm57).